Reading from the N-terminus, the 916-residue chain is Protein translocase subunit SecA (916 aa).

Residues Gln87, Gly105–Thr109, and Asp507 contribute to the ATP site. Zn(2+) is bound by residues Cys900, Cys902, Cys911, and His912.

This sequence belongs to the SecA family. Monomer and homodimer. Part of the essential Sec protein translocation apparatus which comprises SecA, SecYEG and auxiliary proteins SecDF-YajC and YidC. The cofactor is Zn(2+).

The protein localises to the cell inner membrane. It localises to the cytoplasm. The enzyme catalyses ATP + H2O + cellular proteinSide 1 = ADP + phosphate + cellular proteinSide 2.. In terms of biological role, part of the Sec protein translocase complex. Interacts with the SecYEG preprotein conducting channel. Has a central role in coupling the hydrolysis of ATP to the transfer of proteins into and across the cell membrane, serving both as a receptor for the preprotein-SecB complex and as an ATP-driven molecular motor driving the stepwise translocation of polypeptide chains across the membrane. The chain is Protein translocase subunit SecA from Neisseria gonorrhoeae (strain ATCC 700825 / FA 1090).